A 486-amino-acid polypeptide reads, in one-letter code: Ribulose bisphosphate carboxylase large chain 1 (486 aa).

Residues Asn-125 and Thr-175 each coordinate substrate. The active-site Proton acceptor is the Lys-177. Lys-179 is a substrate binding site. Lys-203, Asp-205, and Glu-206 together coordinate Mg(2+). Lys-203 bears the N6-carboxylysine mark. His-295 functions as the Proton acceptor in the catalytic mechanism. 3 residues coordinate substrate: Arg-296, His-328, and Ser-380.

It belongs to the RuBisCO large chain family. Type I subfamily. In terms of assembly, heterohexadecamer of 8 large chains and 8 small chains. The cofactor is Mg(2+).

The enzyme catalyses 2 (2R)-3-phosphoglycerate + 2 H(+) = D-ribulose 1,5-bisphosphate + CO2 + H2O. It catalyses the reaction D-ribulose 1,5-bisphosphate + O2 = 2-phosphoglycolate + (2R)-3-phosphoglycerate + 2 H(+). Functionally, ruBisCO catalyzes two reactions: the carboxylation of D-ribulose 1,5-bisphosphate, the primary event in carbon dioxide fixation, as well as the oxidative fragmentation of the pentose substrate. Both reactions occur simultaneously and in competition at the same active site. The chain is Ribulose bisphosphate carboxylase large chain 1 from Cereibacter sphaeroides (strain ATCC 17025 / ATH 2.4.3) (Rhodobacter sphaeroides).